A 230-amino-acid polypeptide reads, in one-letter code: Cytidylate kinase (230 aa).

12-20 contributes to the ATP binding site; the sequence is GPSGTGKST.

It belongs to the cytidylate kinase family. Type 1 subfamily.

Its subcellular location is the cytoplasm. The catalysed reaction is CMP + ATP = CDP + ADP. The enzyme catalyses dCMP + ATP = dCDP + ADP. The sequence is that of Cytidylate kinase from Corynebacterium efficiens (strain DSM 44549 / YS-314 / AJ 12310 / JCM 11189 / NBRC 100395).